Here is a 702-residue protein sequence, read N- to C-terminus: Polyribonucleotide nucleotidyltransferase (702 aa).

2 residues coordinate Mg(2+): Asp487 and Asp493. The 60-residue stretch at Pro554 to Ile613 folds into the KH domain. The 69-residue stretch at Gly623 to Lys691 folds into the S1 motif domain.

This sequence belongs to the polyribonucleotide nucleotidyltransferase family. The cofactor is Mg(2+).

It localises to the cytoplasm. It catalyses the reaction RNA(n+1) + phosphate = RNA(n) + a ribonucleoside 5'-diphosphate. Involved in mRNA degradation. Catalyzes the phosphorolysis of single-stranded polyribonucleotides processively in the 3'- to 5'-direction. The chain is Polyribonucleotide nucleotidyltransferase from Anoxybacillus flavithermus (strain DSM 21510 / WK1).